A 390-amino-acid chain; its full sequence is Flap endonuclease 1-1 (390 aa).

Positions 1–108 are N-domain; it reads MGIHQLMQFL…GELARRKKLK (108 aa). Residue Asp34 coordinates Mg(2+). Arg74 contributes to the DNA binding site. 5 residues coordinate Mg(2+): Asp90, Glu162, Glu164, Asp183, and Asp185. Residues 126–254 are I-domain; it reads QALLQHQRTT…GTAYKLIKEF (129 aa). Residue Glu162 participates in DNA binding. DNA contacts are provided by Gly232 and Asp234. Asp234 contributes to the Mg(2+) binding site. Residues 348 to 356 form an interaction with PCNA region; sequence FQSRLENFF. The tract at residues 359–390 is disordered; it reads TTKIIHPNNSKAKGKANKKNEQTQKSGGKKKI.

The protein belongs to the XPG/RAD2 endonuclease family. FEN1 subfamily. As to quaternary structure, interacts with PCNA. Three molecules of FEN1 bind to one PCNA trimer with each molecule binding to one PCNA monomer. PCNA stimulates the nuclease activity without altering cleavage specificity. Mg(2+) is required as a cofactor. Post-translationally, phosphorylated. Phosphorylation upon DNA damage induces relocalization to the nuclear plasma.

The protein resides in the nucleus. Its subcellular location is the nucleolus. The protein localises to the nucleoplasm. It is found in the mitochondrion. Structure-specific nuclease with 5'-flap endonuclease and 5'-3' exonuclease activities involved in DNA replication and repair. During DNA replication, cleaves the 5'-overhanging flap structure that is generated by displacement synthesis when DNA polymerase encounters the 5'-end of a downstream Okazaki fragment. It enters the flap from the 5'-end and then tracks to cleave the flap base, leaving a nick for ligation. Also involved in the long patch base excision repair (LP-BER) pathway, by cleaving within the apurinic/apyrimidinic (AP) site-terminated flap. Acts as a genome stabilization factor that prevents flaps from equilibrating into structures that lead to duplications and deletions. Also possesses 5'-3' exonuclease activity on nicked or gapped double-stranded DNA, and exhibits RNase H activity. Also involved in replication and repair of rDNA and in repairing mitochondrial DNA. The polypeptide is Flap endonuclease 1-1 (Paramecium tetraurelia).